Reading from the N-terminus, the 194-residue chain is Threonylcarbamoyl-AMP synthase (194 aa).

The region spanning 12–194 (SPNMKDLLIQ…DVMTGKLIRE (183 aa)) is the YrdC-like domain.

The protein belongs to the SUA5 family. TsaC subfamily.

The protein localises to the cytoplasm. It catalyses the reaction L-threonine + hydrogencarbonate + ATP = L-threonylcarbamoyladenylate + diphosphate + H2O. Required for the formation of a threonylcarbamoyl group on adenosine at position 37 (t(6)A37) in tRNAs that read codons beginning with adenine. Catalyzes the conversion of L-threonine, HCO(3)(-)/CO(2) and ATP to give threonylcarbamoyl-AMP (TC-AMP) as the acyladenylate intermediate, with the release of diphosphate. This Blochmanniella pennsylvanica (strain BPEN) protein is Threonylcarbamoyl-AMP synthase.